The sequence spans 84 residues: MLAIRLSRGGSRKRPFYHVVATDSRNARDSNFIERLGFFNPQARGQEEELRLDLERIEYWQSQGGQISDRVKSLIKQYKKSANK.

The protein belongs to the bacterial ribosomal protein bS16 family.

This is Small ribosomal subunit protein bS16 from Dichelobacter nodosus (strain VCS1703A).